The primary structure comprises 831 residues: Phenylalanine--tRNA ligase beta subunit (831 aa).

Residues 44–155 enclose the tRNA-binding domain; sequence GPVDGPVTVG…GAAEPGADGA (112 aa). The 76-residue stretch at 414–489 folds into the B5 domain; it reads WSPPPIRMGV…RLEGLEVIPS (76 aa). Mg(2+)-binding residues include Asp-467, Asp-473, Glu-476, and Glu-477. The region spanning 737 to 830 is the FDX-ACB domain; that stretch reads SPYPAVFQDV…AAERVGAVLR (94 aa).

The protein belongs to the phenylalanyl-tRNA synthetase beta subunit family. Type 1 subfamily. As to quaternary structure, tetramer of two alpha and two beta subunits. Mg(2+) is required as a cofactor.

The protein resides in the cytoplasm. It catalyses the reaction tRNA(Phe) + L-phenylalanine + ATP = L-phenylalanyl-tRNA(Phe) + AMP + diphosphate + H(+). The polypeptide is Phenylalanine--tRNA ligase beta subunit (pheT) (Mycobacterium tuberculosis (strain ATCC 25618 / H37Rv)).